Reading from the N-terminus, the 387-residue chain is Chaperone protein DnaJ (387 aa).

Positions 5–70 (DYYEVLGLQK…DKKAKYDQFG (66 aa)) constitute a J domain. A CR-type zinc finger spans residues 144–226 (GCEKEISITR…CKGKGTVRKN (83 aa)). Positions 157, 160, 174, 177, 200, 203, 214, and 217 each coordinate Zn(2+). CXXCXGXG motif repeat units lie at residues 157–164 (CETCHGTG), 174–181 (CPKCNGSG), 200–207 (CDQCGGTG), and 214–221 (CPDCKGKG).

It belongs to the DnaJ family. Homodimer. Requires Zn(2+) as cofactor.

It localises to the cytoplasm. Participates actively in the response to hyperosmotic and heat shock by preventing the aggregation of stress-denatured proteins and by disaggregating proteins, also in an autonomous, DnaK-independent fashion. Unfolded proteins bind initially to DnaJ; upon interaction with the DnaJ-bound protein, DnaK hydrolyzes its bound ATP, resulting in the formation of a stable complex. GrpE releases ADP from DnaK; ATP binding to DnaK triggers the release of the substrate protein, thus completing the reaction cycle. Several rounds of ATP-dependent interactions between DnaJ, DnaK and GrpE are required for fully efficient folding. Also involved, together with DnaK and GrpE, in the DNA replication of plasmids through activation of initiation proteins. This is Chaperone protein DnaJ from Clostridium perfringens (strain 13 / Type A).